The sequence spans 420 residues: Na(+)/H(+) antiporter NhaA (420 aa).

11 consecutive transmembrane segments (helical) span residues valine 4 to isoleucine 24, aspartate 70 to leucine 90, leucine 104 to phenylalanine 124, alanine 132 to glycine 152, phenylalanine 165 to tyrosine 185, proline 192 to leucine 212, leucine 233 to methionine 250, valine 299 to glycine 319, tryptophan 323 to leucine 343, leucine 361 to valine 381, and glycine 395 to valine 415.

This sequence belongs to the NhaA Na(+)/H(+) (TC 2.A.33) antiporter family.

The protein localises to the cell inner membrane. The enzyme catalyses Na(+)(in) + 2 H(+)(out) = Na(+)(out) + 2 H(+)(in). In terms of biological role, na(+)/H(+) antiporter that extrudes sodium in exchange for external protons. The protein is Na(+)/H(+) antiporter NhaA of Jannaschia sp. (strain CCS1).